The chain runs to 430 residues: Glial fibrillary acidic protein (430 aa).

Residues 1–69 form a head region; sequence MERRRITSAR…KETRASERAE (69 aa). Thr-7 is subject to Phosphothreonine; by AURKB and ROCK1. Arg-11 is modified (omega-N-methylarginine). Position 12 is a phosphoserine; by AURKB and ROCK1 (Ser-12). The residue at position 20 (Arg-20) is an Omega-N-methylarginine. Position 33 is a citrulline (Arg-33). Residue Ser-35 is modified to Phosphoserine; by AURKB and ROCK1. Position 40 is a phosphothreonine (Thr-40). The 309-residue stretch at 66–374 folds into the IF rod domain; that stretch reads ERAEMMELND…KLLEGEENRI (309 aa). Residues 70–101 form a coil 1A region; that stretch reads MMELNDRFASYIEKVRFLEQQNKALAAELNQL. Phosphoserine is present on Ser-79. The interval 102-112 is linker 1; sequence RAKEPTKLADV. Phosphothreonine occurs at positions 107 and 147. A coil 1B region spans residues 113 to 211; the sequence is YQAELRELRL…EEEVRELREQ (99 aa). The tract at residues 212-227 is linker 12; sequence LAQQQVHVEMDVAKPD. The interval 228–249 is coil 2A; sequence LTAALREIRTQYEAVATSNMQE. Residues 250-253 are linker 2; that stretch reads TEEW. A coil 2B region spans residues 254 to 374; it reads YRSKFADLTD…KLLEGEENRI (121 aa). At Ser-266 the chain carries Phosphoserine. At Arg-267 the chain carries Citrulline. Ser-320 is modified (phosphoserine). Residues 375–430 are tail; the sequence is TIPVQTFSNLQIRETSLDTKSVSEGHLKRNIVVKTVEMRDGEVIKDSKQEHKDVVM. Position 380 is a phosphothreonine (Thr-380). At Ser-382 the chain carries Phosphoserine. Residues Arg-403 and Arg-413 each carry the citrulline modification.

Belongs to the intermediate filament family. Interacts with SYNM. As to quaternary structure, interacts with PSEN1 (via N-terminus). Post-translationally, phosphorylated by PKN1. As to expression, brain; isoform 2 expressed at 20-fold lower level than isoform 1.

It localises to the cytoplasm. Its function is as follows. GFAP, a class-III intermediate filament, is a cell-specific marker that, during the development of the central nervous system, distinguishes astrocytes from other glial cells. This chain is Glial fibrillary acidic protein (Gfap), found in Mus musculus (Mouse).